Consider the following 309-residue polypeptide: Homoserine kinase (309 aa).

91-101 is an ATP binding site; sequence PIGSGLGSSAC.

This sequence belongs to the GHMP kinase family. Homoserine kinase subfamily.

It is found in the cytoplasm. The enzyme catalyses L-homoserine + ATP = O-phospho-L-homoserine + ADP + H(+). The protein operates within amino-acid biosynthesis; L-threonine biosynthesis; L-threonine from L-aspartate: step 4/5. Functionally, catalyzes the ATP-dependent phosphorylation of L-homoserine to L-homoserine phosphate. The chain is Homoserine kinase from Klebsiella pneumoniae subsp. pneumoniae (strain ATCC 700721 / MGH 78578).